A 445-amino-acid chain; its full sequence is Inner membrane metabolite transport protein YgcS (445 aa).

Residues 1-22 (MNTSPVRMDDLPLNRFHCRIAA) are Cytoplasmic-facing. A helical membrane pass occupies residues 23-43 (LTFGAHLTDGYVLGVIGYAII). The Periplasmic portion of the chain corresponds to 44–56 (QLTPAMQLTPFMA). The helical transmembrane segment at 57-77 (GMIGGSALLGLFLGSLVLGWI) threads the bilayer. Over 78–85 (SDHIGRQK) the chain is Cytoplasmic. The chain crosses the membrane as a helical span at residues 86-106 (IFTFSFLLITLASFLQFFATT). Over 107 to 114 (PEHLIGLR) the chain is Periplasmic. A helical membrane pass occupies residues 115–135 (ILIGIGLGGDYSVGHTLLAEF). Residues 136–142 (SPRRHRG) lie on the Cytoplasmic side of the membrane. A helical membrane pass occupies residues 143 to 163 (ILLGAFSVVWTVGYVLASIAG). At 164-175 (HHFISENPEAWR) the chain is on the periplasmic side. Residues 176–196 (WLLASAALPALLITLLRWGTP) traverse the membrane as a helical segment. The Cytoplasmic portion of the chain corresponds to 197 to 253 (ESPRWLLRQGRFAEAHAIVHRYFGPHVLLGDEVVTATHKHIKTLFSSRYWRRTAFNS). A helical transmembrane segment spans residues 254–274 (VFFVCLVIPWFVIYTWLPTIA). The Periplasmic portion of the chain corresponds to 275 to 286 (QTIGLEDALTAS). The helical transmembrane segment at 287-307 (LMLNALLIVGALLGLVLTHLL) threads the bilayer. The Cytoplasmic portion of the chain corresponds to 308-311 (AHRK). A helical transmembrane segment spans residues 312 to 332 (FLLGSFLLLAATLVVMACLPS). Residues 333-337 (GSSLT) lie on the Periplasmic side of the membrane. The chain crosses the membrane as a helical span at residues 338 to 358 (LLLFVLFSTTISAVSNLVGIL). Residues 359–369 (PAESFPTDIRS) lie on the Cytoplasmic side of the membrane. Residues 370-390 (LGVGFATAMSRLGAAVSTGLL) form a helical membrane-spanning segment. The Periplasmic segment spans residues 391 to 400 (PWVLAQWGMQ). The helical transmembrane segment at 401–421 (VTLLLLATVLLVGFVVTWLWA) threads the bilayer. Topologically, residues 422 to 445 (PETKALPLVAAGNVGGANEHSVSV) are cytoplasmic.

This sequence belongs to the major facilitator superfamily. Sugar transporter (TC 2.A.1.1) family.

It is found in the cell inner membrane. The sequence is that of Inner membrane metabolite transport protein YgcS (ygcS) from Escherichia coli (strain K12).